The following is a 307-amino-acid chain: MAAICQFTPKDISMEARNMTPFTYFSLPMQKLFLRNQAAVRNKPYAKYFRSEMRVPLSAVRKIQQGPMALEDTLTPSIEDINRLLEPDFVSEESGYALLPGPMAYVQSRKFFPGCTAQMFKWWFIWHPAESERYTLWFPYAHVSNPCVHHQRLCDESLSFEERLYGNTFCASEYVGDRLMHLHIDFQQPASLGLNTDLYREAKIDGSVSALMSLADHPEVPVSLMVHLFKEVPDGMYLTSRYWVGAHPSMARFPGAEKAASLLKENGFGEAELETLAYEFAVHDMCEFNHLASFLPDLYREFGTPAA.

Positions 142, 173, 283, and 287 each coordinate Zn(2+).

The protein belongs to the DAPG/phloretin hydrolase family. Requires Zn(2+) as cofactor.

It catalyses the reaction 2,4-diacetylphloroglucinol + H2O = 2-acetylphloroglucinol + acetate. Its activity is regulated as follows. Activity is strongly reduced by pyoluteorin, an antifungal compound produced by the bacterium. Its function is as follows. Hydrolase that specifically degrades the potent antimicrobial compound 2,4-diacetylphloroglucinol (DAPG) to equimolar amounts of mildly toxic monoacetylphloroglucinol (MAPG) and acetate. Does not degrade other compounds with structures similar to DAPG, such as MAPG and triacetylphloroglucinol, suggesting strict substrate specificity. Degradation of DAPG to MAPG may provide an additional means of fine-tuning levels of this antibiotic or may help avoid accumulation of a metabolite that at high levels may become toxic to the producing bacterium. The sequence is that of 2,4-diacetylphloroglucinol hydrolase from Pseudomonas protegens (strain DSM 19095 / LMG 27888 / CFBP 6595 / CHA0).